Consider the following 214-residue polypeptide: 3-demethoxyubiquinol 3-hydroxylase (214 aa).

Residues Glu-63, Glu-93, His-96, Glu-145, Glu-177, and His-180 each coordinate Fe cation.

Belongs to the COQ7 family. Requires Fe cation as cofactor.

Its subcellular location is the cell membrane. It carries out the reaction a 5-methoxy-2-methyl-3-(all-trans-polyprenyl)benzene-1,4-diol + AH2 + O2 = a 3-demethylubiquinol + A + H2O. It participates in cofactor biosynthesis; ubiquinone biosynthesis. In terms of biological role, catalyzes the hydroxylation of 2-nonaprenyl-3-methyl-6-methoxy-1,4-benzoquinol during ubiquinone biosynthesis. The protein is 3-demethoxyubiquinol 3-hydroxylase of Psychrobacter arcticus (strain DSM 17307 / VKM B-2377 / 273-4).